A 930-amino-acid polypeptide reads, in one-letter code: Isoleucine--tRNA ligase (930 aa).

The 'HIGH' region signature appears at 57-67 (PYANGHLHLGH). Glutamate 555 is an L-isoleucyl-5'-AMP binding site. The short motif at 596–600 (KMSKS) is the 'KMSKS' region element. Residue lysine 599 coordinates ATP. Residues cysteine 896, cysteine 899, cysteine 916, and cysteine 919 each coordinate Zn(2+).

The protein belongs to the class-I aminoacyl-tRNA synthetase family. IleS type 1 subfamily. In terms of assembly, monomer. Zn(2+) serves as cofactor.

The protein resides in the cytoplasm. The catalysed reaction is tRNA(Ile) + L-isoleucine + ATP = L-isoleucyl-tRNA(Ile) + AMP + diphosphate. Functionally, catalyzes the attachment of isoleucine to tRNA(Ile). As IleRS can inadvertently accommodate and process structurally similar amino acids such as valine, to avoid such errors it has two additional distinct tRNA(Ile)-dependent editing activities. One activity is designated as 'pretransfer' editing and involves the hydrolysis of activated Val-AMP. The other activity is designated 'posttransfer' editing and involves deacylation of mischarged Val-tRNA(Ile). This chain is Isoleucine--tRNA ligase, found in Moorella thermoacetica (strain ATCC 39073 / JCM 9320).